The primary structure comprises 109 residues: Heterogeneous nuclear ribonucleoprotein-like protein HD40 (109 aa).

The interval 1-36 is disordered; it reads EEVSNGQEHTEGMXQGEXNXIXVEEHHEGEKNSHLV. The segment covering 23–36 has biased composition (basic and acidic residues); it reads VEEHHEGEKNSHLV. One can recognise an RRM domain in the interval 40–50; that stretch reads EEKKLFVGALS. Residues R102 and R105 each carry the asymmetric dimethylarginine modification.

It localises to the cytoplasm. Its subcellular location is the nucleus. The polypeptide is Heterogeneous nuclear ribonucleoprotein-like protein HD40 (Artemia salina (Brine shrimp)).